Consider the following 496-residue polypeptide: Chaperone SurA (496 aa).

A signal peptide spans 1–42; that stretch reads MACKSTAVRSATRVAPTRRLGMVTGALVALMAGAALLPAAHA. The disordered stretch occupies residues 53–80; the sequence is RGIFTTPDASPSQPLLRGTLPGPSTASG. PpiC domains lie at 235–337 and 349–447; these read VQEY…KLVD and VAQT…QVEG.

It localises to the periplasm. The enzyme catalyses [protein]-peptidylproline (omega=180) = [protein]-peptidylproline (omega=0). Its function is as follows. Chaperone involved in the correct folding and assembly of outer membrane proteins. Recognizes specific patterns of aromatic residues and the orientation of their side chains, which are found more frequently in integral outer membrane proteins. May act in both early periplasmic and late outer membrane-associated steps of protein maturation. This Ralstonia nicotianae (strain ATCC BAA-1114 / GMI1000) (Ralstonia solanacearum) protein is Chaperone SurA.